Reading from the N-terminus, the 603-residue chain is MMQLGGGTPTTTAAATTVTTATAPPPQSNNNDSAATEAAAAAVGAFEVSEEMHDRGFGGNRWPRQETLALLKIRSDMGIAFRDASVKGPLWEEVSRKMAEHGYIRNAKKCKEKFENVYKYHKRTKEGRTGKSEGKTYRFFDQLEALESQSTTSLHHHQQQTPLRPQQNNNNNNNNNNNSSIFSTPPPVTTVMPTLPSSSIPPYTQQINVPSFPNISGDFLSDNSTSSSSSYSTSSDMEMGGGTATTRKKRKRKWKVFFERLMKQVVDKQEELQRKFLEAVEKREHERLVREESWRVQEIARINREHEILAQERSMSAAKDAAVMAFLQKLSEKQPNQPQPQPQPQQVRPSMQLNNNNQQQPPQRSPPPQPPAPLPQPIQAVVSTLDTTKTDNGGDQNMTPAASASSSRWPKVEIEALIKLRTNLDSKYQENGPKGPLWEEISAGMRRLGFNRNSKRCKEKWENINKYFKKVKESNKKRPEDSKTCPYFHQLDALYRERNKFHSNNNIAASSSSSGLVKPDNSVPLMVQPEQQWPPAVTTATTTPAAAQPDQQSQPSEQNFDDEEGTDEEYDDEDEEEENEEEEGGEFELVPSNNNNNKTTNNL.

A Myb-like 1 domain is found at 60–118; sequence NRWPRQETLALLKIRSDMGIAFRDASVKGPLWEEVSRKMAEHGYIRNAKKCKEKFENVY. Disordered stretches follow at residues 149-201, 220-249, 333-408, and 532-603; these read QSTT…SSIP, LSDN…TRKK, KQPN…SSSR, and QWPP…TNNL. Low complexity-rich tracts occupy residues 168–178, 189–198, 221–236, and 344–362; these read NNNNNNNNNNN, TTVMPTLPSS, SDNS…TSSD, and PQQV…QQPP. Residues 363 to 376 are compositionally biased toward pro residues; the sequence is QRSPPPQPPAPLPQ. A compositionally biased stretch (polar residues) spans 381-408; it reads VVSTLDTTKTDNGGDQNMTPAASASSSR. Residues 401 to 465 enclose the Myb-like 2 domain; sequence AASASSSRWP…RCKEKWENIN (65 aa). A compositionally biased stretch (low complexity) spans 532–555; sequence QWPPAVTTATTTPAAAQPDQQSQP. Residues 559–586 show a composition bias toward acidic residues; that stretch reads NFDDEEGTDEEYDDEDEEEENEEEEGGE. Low complexity predominate over residues 593 to 603; sequence NNNNNKTTNNL.

It is found in the nucleus. In terms of biological role, transcription repressor that negatively regulates root hair growth by directly binding RSL4 promoter and repressing RSL4 expression. Required for the synthesis of seed coat mucilage. In Arabidopsis thaliana (Mouse-ear cress), this protein is Trihelix transcription factor DF1.